A 168-amino-acid polypeptide reads, in one-letter code: Shikimate kinase (168 aa).

Gly-11 to Thr-16 lines the ATP pocket. Position 15 (Thr-15) interacts with Mg(2+). Substrate contacts are provided by Asp-33, Arg-57, and Gly-78. Arg-118 provides a ligand contact to ATP. Arg-136 is a substrate binding site. Arg-153 serves as a coordination point for ATP.

This sequence belongs to the shikimate kinase family. In terms of assembly, monomer. Mg(2+) serves as cofactor.

The protein resides in the cytoplasm. The catalysed reaction is shikimate + ATP = 3-phosphoshikimate + ADP + H(+). Its pathway is metabolic intermediate biosynthesis; chorismate biosynthesis; chorismate from D-erythrose 4-phosphate and phosphoenolpyruvate: step 5/7. Its function is as follows. Catalyzes the specific phosphorylation of the 3-hydroxyl group of shikimic acid using ATP as a cosubstrate. The polypeptide is Shikimate kinase (Enterococcus faecalis (strain ATCC 700802 / V583)).